The following is a 559-amino-acid chain: ATP synthase subunit beta-3, mitochondrial (559 aa).

Low complexity predominate over residues 1–28 (MASRRILSSLLRSSSSRSTSKSSLIGSR). A disordered region spans residues 1-39 (MASRRILSSLLRSSSSRSTSKSSLIGSRNPRLLSPGPAH). The transit peptide at 1 to 54 (MASRRILSSLLRSSSSRSTSKSSLIGSRNPRLLSPGPAHGAAPCGTLLGRVAEY) directs the protein to the mitochondrion. Ser62 carries the post-translational modification Phosphoserine. 234–241 (GGAGVGKT) serves as a coordination point for ATP.

The protein belongs to the ATPase alpha/beta chains family. In terms of assembly, F-type ATPases have 2 components, CF(1) - the catalytic core - and CF(0) - the membrane proton channel. CF(1) has five subunits: alpha(3), beta(3), gamma(1), delta(1), epsilon(1). CF(0) has three main subunits: a, b and c.

It localises to the mitochondrion. The protein localises to the mitochondrion inner membrane. It catalyses the reaction ATP + H2O + 4 H(+)(in) = ADP + phosphate + 5 H(+)(out). Functionally, mitochondrial membrane ATP synthase (F(1)F(0) ATP synthase or Complex V) produces ATP from ADP in the presence of a proton gradient across the membrane which is generated by electron transport complexes of the respiratory chain. F-type ATPases consist of two structural domains, F(1) - containing the extramembraneous catalytic core, and F(0) - containing the membrane proton channel, linked together by a central stalk and a peripheral stalk. During catalysis, ATP synthesis in the catalytic domain of F(1) is coupled via a rotary mechanism of the central stalk subunits to proton translocation. Subunits alpha and beta form the catalytic core in F(1). Rotation of the central stalk against the surrounding alpha(3)beta(3) subunits leads to hydrolysis of ATP in three separate catalytic sites on the beta subunits. The chain is ATP synthase subunit beta-3, mitochondrial from Arabidopsis thaliana (Mouse-ear cress).